A 128-amino-acid polypeptide reads, in one-letter code: Saitohin (128 aa).

Residues 77 to 128 (SYSSEESSRNGAEQGRQLSIEGPFQGQNCPSHPAAALPLPMRGESQATSCQV) form a disordered region.

Interacts with PRDX6.

It is found in the cytoplasm. The protein localises to the nucleus. The polypeptide is Saitohin (STH) (Gorilla gorilla gorilla (Western lowland gorilla)).